A 428-amino-acid polypeptide reads, in one-letter code: Histidine--tRNA ligase (428 aa).

Belongs to the class-II aminoacyl-tRNA synthetase family. Homodimer.

The protein localises to the cytoplasm. The enzyme catalyses tRNA(His) + L-histidine + ATP = L-histidyl-tRNA(His) + AMP + diphosphate + H(+). The protein is Histidine--tRNA ligase of Lactobacillus johnsonii (strain CNCM I-12250 / La1 / NCC 533).